Consider the following 325-residue polypeptide: Glutarate 2-hydroxylase (325 aa).

Fe cation is bound by residues histidine 160, aspartate 162, and histidine 292.

The protein belongs to the glutarate hydroxylase family. In terms of assembly, homotetramer. Fe(2+) is required as a cofactor.

It catalyses the reaction glutarate + 2-oxoglutarate + O2 = (S)-2-hydroxyglutarate + succinate + CO2. Its pathway is amino-acid degradation. In terms of biological role, acts as an alpha-ketoglutarate-dependent dioxygenase catalyzing hydroxylation of glutarate (GA) to L-2-hydroxyglutarate (L2HG). Functions in a L-lysine degradation pathway that proceeds via cadaverine, glutarate and L-2-hydroxyglutarate. The polypeptide is Glutarate 2-hydroxylase (Escherichia fergusonii (strain ATCC 35469 / DSM 13698 / CCUG 18766 / IAM 14443 / JCM 21226 / LMG 7866 / NBRC 102419 / NCTC 12128 / CDC 0568-73)).